Here is a 300-residue protein sequence, read N- to C-terminus: Fe(3+) dicitrate-binding periplasmic protein FecB (300 aa).

The first 21 residues, 1-21 (MLAFIRFLFAGLLLVISHAFA), serve as a signal peptide directing secretion. In terms of domain architecture, Fe/B12 periplasmic-binding spans 39–295 (RIVVLELSFA…DTVKIFHHQP (257 aa)).

It belongs to the bacterial solute-binding protein 8 family. In terms of assembly, the complex is composed of two ATP-binding proteins (FecE), two transmembrane proteins (FecC and FecD) and a solute-binding protein (FecB). Interacts with FecC and FecD.

The protein localises to the periplasm. Functionally, part of the ABC transporter complex FecBCDE involved in citrate-dependent Fe(3+) uptake. Binds both iron-free and iron-loaded citrate although it binds iron-loaded citrate with a higher affinity. Binds different forms of Fe(3+)-citrate as well as citrate complexed with various representative Fe(3+)-mimics (Ga(3+), Al(3+), Sc(3+) and In(3+)) and a representative divalent metal ion (Mg(2+)). Can also bind various tricarboxylates in iron-free and iron-loaded form. This is Fe(3+) dicitrate-binding periplasmic protein FecB from Escherichia coli (strain K12).